A 221-amino-acid polypeptide reads, in one-letter code: Small ribosomal subunit protein uS3 (221 aa).

Residues 39 to 108 (IRKFVKKELF…NVLINIVEVK (70 aa)) form the KH type-2 domain.

The protein belongs to the universal ribosomal protein uS3 family. Part of the 30S ribosomal subunit. Forms a tight complex with proteins S10 and S14.

Binds the lower part of the 30S subunit head. Binds mRNA in the 70S ribosome, positioning it for translation. The sequence is that of Small ribosomal subunit protein uS3 from Clostridium beijerinckii (strain ATCC 51743 / NCIMB 8052) (Clostridium acetobutylicum).